Reading from the N-terminus, the 356-residue chain is Cdc42 effector protein 4 (356 aa).

An N6-methyllysine modification is found at K5. S18 bears the Phosphoserine mark. The CRIB domain maps to 27–41 (ISAPLGDFRHTMHVG). The interval 51-102 (SFLNSKAGEPDGESLDEQPSSSSSKRSLLSRKFRGSKRSQSVTRGEREQRDM) is disordered. S64 bears the Phosphoserine mark. The segment covering 78–87 (LLSRKFRGSK) has biased composition (basic residues). S105, S109, and S118 each carry phosphoserine. Disordered regions lie at residues 122-182 (LNEK…LDEQ) and 257-356 (VAAP…EIRV). A compositionally biased stretch (basic and acidic residues) spans 123-132 (NEKEAAEKGT). Over residues 133 to 143 (SKLPKSLSSSP) the composition is skewed to low complexity. Phosphoserine occurs at positions 138, 140, 142, 174, 292, and 295. A compositionally biased stretch (low complexity) spans 287–315 (AAAAPSPGSARSMGSHTTRDSSSLSSCTS). Over residues 318-344 (LEERSPAFRGPDRARAAVSRQPDKEFS) the composition is skewed to basic and acidic residues. Acidic residues predominate over residues 345–356 (FMDEEEEDEIRV).

This sequence belongs to the BORG/CEP family. As to quaternary structure, interacts with CDC42 and RHOQ, in a GTP-dependent manner. Not detected in any of the adult tissues tested. May be expressed only in fetal or embryonic tissues.

It localises to the endomembrane system. The protein localises to the cytoplasm. The protein resides in the cytoskeleton. Probably involved in the organization of the actin cytoskeleton. May act downstream of CDC42 to induce actin filament assembly leading to cell shape changes. Induces pseudopodia formation, when overexpressed in fibroblasts. This Homo sapiens (Human) protein is Cdc42 effector protein 4 (CDC42EP4).